The primary structure comprises 314 residues: DNA-directed RNA polymerase subunit alpha (314 aa).

Residues 1-228 are alpha N-terminal domain (alpha-NTD); sequence MIEIEKPKIE…EHLNIFVGLT (228 aa). Positions 245 to 314 are alpha C-terminal domain (alpha-CTD); it reads KEKVMEMTIE…DLGLGLRDDD (70 aa).

This sequence belongs to the RNA polymerase alpha chain family. Homodimer. The RNAP catalytic core consists of 2 alpha, 1 beta, 1 beta' and 1 omega subunit. When a sigma factor is associated with the core the holoenzyme is formed, which can initiate transcription.

It carries out the reaction RNA(n) + a ribonucleoside 5'-triphosphate = RNA(n+1) + diphosphate. In terms of biological role, DNA-dependent RNA polymerase catalyzes the transcription of DNA into RNA using the four ribonucleoside triphosphates as substrates. The sequence is that of DNA-directed RNA polymerase subunit alpha from Oceanobacillus iheyensis (strain DSM 14371 / CIP 107618 / JCM 11309 / KCTC 3954 / HTE831).